A 371-amino-acid chain; its full sequence is tRNA 2-selenouridine synthase (371 aa).

Residues 14–137 form the Rhodanese domain; it reads FLDDVPLIDL…MRRFLIDTLD (124 aa). Residue cysteine 97 is the S-selanylcysteine intermediate of the active site.

The protein belongs to the SelU family. In terms of assembly, monomer.

It catalyses the reaction 5-methylaminomethyl-2-thiouridine(34) in tRNA + selenophosphate + (2E)-geranyl diphosphate + H2O + H(+) = 5-methylaminomethyl-2-selenouridine(34) in tRNA + (2E)-thiogeraniol + phosphate + diphosphate. It carries out the reaction 5-methylaminomethyl-2-thiouridine(34) in tRNA + (2E)-geranyl diphosphate = 5-methylaminomethyl-S-(2E)-geranyl-thiouridine(34) in tRNA + diphosphate. The catalysed reaction is 5-methylaminomethyl-S-(2E)-geranyl-thiouridine(34) in tRNA + selenophosphate + H(+) = 5-methylaminomethyl-2-(Se-phospho)selenouridine(34) in tRNA + (2E)-thiogeraniol. The enzyme catalyses 5-methylaminomethyl-2-(Se-phospho)selenouridine(34) in tRNA + H2O = 5-methylaminomethyl-2-selenouridine(34) in tRNA + phosphate. Its function is as follows. Involved in the post-transcriptional modification of the uridine at the wobble position (U34) of tRNA(Lys), tRNA(Glu) and tRNA(Gln). Catalyzes the conversion of 2-thiouridine (S2U-RNA) to 2-selenouridine (Se2U-RNA). Acts in a two-step process involving geranylation of 2-thiouridine (S2U) to S-geranyl-2-thiouridine (geS2U) and subsequent selenation of the latter derivative to 2-selenouridine (Se2U) in the tRNA chain. The polypeptide is tRNA 2-selenouridine synthase (Aeromonas salmonicida (strain A449)).